The following is a 537-amino-acid chain: MEFPDHSRHLLQCLSEQRHQGFLCDSTVLVGDAQFRAHRAVLASCSMYFHLFYKDQLDKRDIVHLNSDIVTAPAFALLLEFMYEGKLQFKSLPVEDVLAAASYLHMYDIVKVCKKKLKQKATAEADSTKREEDTSSCSDKVESFSEGGSTGRPATADLLQSDDEDMENKRDSPQEPGSMWMRLPSDRTTSPTTSPREAETHGPDAGKSPAGSPSSSSGSLSRRSAASRRVSADTDCVLDLSVKSSLGGGPGENIAGNPYFCSSVTPDSLQSALVQVKVEKDTGSDDDELVSGDYEMEHSGVKEPPSTNGTHLSLVAQRRLGLEAHLSALREASLASELERDDKGGDDDTDVLGGDSDRVQEAAGVESSLLPYVSSMLGAPHTQIFMCPLCNKVFPSPHILQIHLSTHFREQEGVRAKPAGDVNVPTCSICGKTFSCMYTLKRHERTHSGEKPYTCTTCGKSFQYSHNLSRHAVVHTREKPHACKWCERRFTQSGDLYRHIRKFHCELVNSLSVKSEALNLPTVRDWALEDSSQELWK.

One can recognise a BTB domain in the interval 24–91 (CDSTVLVGDA…MYEGKLQFKS (68 aa)). Residues 122-143 (TAEADSTKREEDTSSCSDKVES) are compositionally biased toward basic and acidic residues. Disordered regions lie at residues 122–232 (TAEA…RVSA) and 335–355 (ASEL…LGGD). 2 stretches are compositionally biased toward low complexity: residues 182-195 (RLPS…TTSP) and 208-229 (SPAG…ASRR). 4 consecutive C2H2-type zinc fingers follow at residues 385-407 (FMCP…LSTH), 425-447 (PTCS…ERTH), 453-475 (YTCT…AVVH), and 481-504 (HACK…RKFH).

Belongs to the krueppel C2H2-type zinc-finger protein family. ZBTB18 subfamily.

Its subcellular location is the nucleus. Functionally, transcriptional repressor that plays a role in various developmental processes. Specifically binds the consensus DNA sequence 5'-[AC]ACATCTG[GT][AC]-3' which contains the E box core, and acts by recruiting chromatin remodeling multiprotein complexes. This Danio rerio (Zebrafish) protein is Zinc finger and BTB domain-containing protein 18 (zbtb18).